The sequence spans 227 residues: Cytochrome c oxidase subunit 2 (227 aa).

The Mitochondrial intermembrane segment spans residues 1–14 (MAYPFQLGLQDATS). The helical transmembrane segment at 15–45 (PIMEELLHFHDHTLMIVFLISSLVLYIISLM) threads the bilayer. The Mitochondrial matrix segment spans residues 46-59 (LTTKLTHTSTMDAQ). A helical membrane pass occupies residues 60–87 (EVETVWTILPAIILILIALLSLRILYMM). Topologically, residues 88-227 (DEINNPFLTM…YFETWSALMV (140 aa)) are mitochondrial intermembrane. Residues H161, C196, E198, C200, H204, and M207 each contribute to the Cu cation site. E198 is a binding site for Mg(2+). Y218 carries the phosphotyrosine modification.

Belongs to the cytochrome c oxidase subunit 2 family. As to quaternary structure, component of the cytochrome c oxidase (complex IV, CIV), a multisubunit enzyme composed of 14 subunits. The complex is composed of a catalytic core of 3 subunits MT-CO1, MT-CO2 and MT-CO3, encoded in the mitochondrial DNA, and 11 supernumerary subunits COX4I, COX5A, COX5B, COX6A, COX6B, COX6C, COX7A, COX7B, COX7C, COX8 and NDUFA4, which are encoded in the nuclear genome. The complex exists as a monomer or a dimer and forms supercomplexes (SCs) in the inner mitochondrial membrane with NADH-ubiquinone oxidoreductase (complex I, CI) and ubiquinol-cytochrome c oxidoreductase (cytochrome b-c1 complex, complex III, CIII), resulting in different assemblies (supercomplex SCI(1)III(2)IV(1) and megacomplex MCI(2)III(2)IV(2)). Found in a complex with TMEM177, COA6, COX18, COX20, SCO1 and SCO2. Interacts with TMEM177 in a COX20-dependent manner. Interacts with COX20. Interacts with COX16. It depends on Cu cation as a cofactor.

It localises to the mitochondrion inner membrane. It catalyses the reaction 4 Fe(II)-[cytochrome c] + O2 + 8 H(+)(in) = 4 Fe(III)-[cytochrome c] + 2 H2O + 4 H(+)(out). Component of the cytochrome c oxidase, the last enzyme in the mitochondrial electron transport chain which drives oxidative phosphorylation. The respiratory chain contains 3 multisubunit complexes succinate dehydrogenase (complex II, CII), ubiquinol-cytochrome c oxidoreductase (cytochrome b-c1 complex, complex III, CIII) and cytochrome c oxidase (complex IV, CIV), that cooperate to transfer electrons derived from NADH and succinate to molecular oxygen, creating an electrochemical gradient over the inner membrane that drives transmembrane transport and the ATP synthase. Cytochrome c oxidase is the component of the respiratory chain that catalyzes the reduction of oxygen to water. Electrons originating from reduced cytochrome c in the intermembrane space (IMS) are transferred via the dinuclear copper A center (CU(A)) of subunit 2 and heme A of subunit 1 to the active site in subunit 1, a binuclear center (BNC) formed by heme A3 and copper B (CU(B)). The BNC reduces molecular oxygen to 2 water molecules using 4 electrons from cytochrome c in the IMS and 4 protons from the mitochondrial matrix. This Nyctereutes procyonoides (Raccoon dog) protein is Cytochrome c oxidase subunit 2 (MT-CO2).